The following is a 927-amino-acid chain: E3 ubiquitin-protein ligase HOS1 (927 aa).

An RING-type; degenerate zinc finger spans residues 53–93 (CRATRDLASCGRFVNYVLNPCGHASLCTECCQRCDVCPICR). Disordered stretches follow at residues 678-699 (SGQF…LPDA), 782-806 (FKDL…SPEV), and 832-927 (VKSS…FAAR). Positions 797-806 (KRTEESSPEV) are enriched in basic and acidic residues. Polar residues-rich tracts occupy residues 832–851 (VKSS…STFF) and 878–892 (NNNN…NNSG). Over residues 917 to 927 (KGRRRRRFAAR) the composition is skewed to basic residues.

As to quaternary structure, interacts with SCRM/ICE1, FLK and MSI4/FVE. As to expression, ubiquitously expressed with higher levels in leaf vasculature, roots and root tips.

It localises to the nucleus. The protein localises to the cytoplasm. The enzyme catalyses S-ubiquitinyl-[E2 ubiquitin-conjugating enzyme]-L-cysteine + [acceptor protein]-L-lysine = [E2 ubiquitin-conjugating enzyme]-L-cysteine + N(6)-ubiquitinyl-[acceptor protein]-L-lysine.. It functions in the pathway protein modification; protein ubiquitination. Its function is as follows. E3 ubiquitin-protein ligase that mediates ubiquitination and subsequent proteasomal degradation of the transcription factor ICE1. Acts as a negative regulator of cold signaling pathways. Probably involved in recruiting the NUP107-160 subcomplex of the nuclear pore complex to chromatin. Controls flowering time in response to ambient temperatures (16 and 23 degrees Celsius) and intermittent cold, probably via the regulation of FT and TSF levels. The chain is E3 ubiquitin-protein ligase HOS1 (HOS1) from Arabidopsis thaliana (Mouse-ear cress).